Consider the following 367-residue polypeptide: 3-isopropylmalate dehydrogenase (367 aa).

77 to 90 (GPKWDAVPYEVRPE) is a binding site for NAD(+). Arginine 97, arginine 107, arginine 135, and aspartate 226 together coordinate substrate. Mg(2+)-binding residues include aspartate 226, aspartate 250, and aspartate 254. An NAD(+)-binding site is contributed by 290 to 302 (GSAPDIAGKGIAN).

This sequence belongs to the isocitrate and isopropylmalate dehydrogenases family. LeuB type 1 subfamily. As to quaternary structure, homodimer. It depends on Mg(2+) as a cofactor. The cofactor is Mn(2+).

Its subcellular location is the cytoplasm. The catalysed reaction is (2R,3S)-3-isopropylmalate + NAD(+) = 4-methyl-2-oxopentanoate + CO2 + NADH. Its pathway is amino-acid biosynthesis; L-leucine biosynthesis; L-leucine from 3-methyl-2-oxobutanoate: step 3/4. In terms of biological role, catalyzes the oxidation of 3-carboxy-2-hydroxy-4-methylpentanoate (3-isopropylmalate) to 3-carboxy-4-methyl-2-oxopentanoate. The product decarboxylates to 4-methyl-2 oxopentanoate. This chain is 3-isopropylmalate dehydrogenase, found in Mesorhizobium japonicum (strain LMG 29417 / CECT 9101 / MAFF 303099) (Mesorhizobium loti (strain MAFF 303099)).